Here is an 88-residue protein sequence, read N- to C-terminus: UPF0297 protein EAT1b_2723 (88 aa).

The protein belongs to the UPF0297 family.

The polypeptide is UPF0297 protein EAT1b_2723 (Exiguobacterium sp. (strain ATCC BAA-1283 / AT1b)).